We begin with the raw amino-acid sequence, 1020 residues long: 26S proteasome non-ATPase regulatory subunit 1 (1020 aa).

The segment at T279–T322 is disordered. The span at L281–E293 shows a compositional bias: polar residues. T291 is modified (phosphothreonine). Residues D294–E307 show a composition bias toward basic and acidic residues. A phosphoserine mark is found at S298, S303, and S305. T310 carries the post-translational modification Phosphothreonine. PC repeat units follow at residues T418–Y452, G456–R489, G491–E525, A526–L560, G562–R595, S596–R631, A632–R664, G666–Q701, G702–A742, and G745–V777. Disordered stretches follow at residues Q855 to R950 and F999 to D1020. 2 stretches are compositionally biased toward basic and acidic residues: residues R858–E867 and K876–E939. Over residues N1003–D1020 the composition is skewed to acidic residues.

It belongs to the proteasome subunit S1 family.

Acts as a regulatory subunit of the 26S proteasome which is involved in the ATP-dependent degradation of ubiquitinated proteins. The polypeptide is 26S proteasome non-ATPase regulatory subunit 1 (Rpn2) (Drosophila melanogaster (Fruit fly)).